The sequence spans 340 residues: Phenylalanine--tRNA ligase alpha subunit (340 aa).

Residue Glu254 coordinates Mg(2+).

This sequence belongs to the class-II aminoacyl-tRNA synthetase family. Phe-tRNA synthetase alpha subunit type 1 subfamily. Tetramer of two alpha and two beta subunits. Requires Mg(2+) as cofactor.

The protein localises to the cytoplasm. It catalyses the reaction tRNA(Phe) + L-phenylalanine + ATP = L-phenylalanyl-tRNA(Phe) + AMP + diphosphate + H(+). In Caldicellulosiruptor saccharolyticus (strain ATCC 43494 / DSM 8903 / Tp8T 6331), this protein is Phenylalanine--tRNA ligase alpha subunit.